Here is a 1063-residue protein sequence, read N- to C-terminus: NAD-specific glutamate dehydrogenase (1063 aa).

It belongs to the Glu/Leu/Phe/Val dehydrogenases family. Highly divergent. As to quaternary structure, homotetramer.

It carries out the reaction L-glutamate + NAD(+) + H2O = 2-oxoglutarate + NH4(+) + NADH + H(+). Its activity is regulated as follows. Allosterically activated by NADP(+). This Achlya klebsiana protein is NAD-specific glutamate dehydrogenase.